Reading from the N-terminus, the 171-residue chain is tRNA-splicing endonuclease subunit Sen15 (171 aa).

The interval 1-35 (MEERGDSEPTPGCSGLGPGGVRGFGDGGGAPSWAP) is disordered. Residue serine 7 is modified to Phosphoserine. Over residues 14-30 (SGLGPGGVRGFGDGGGA) the composition is skewed to gly residues. Serine 168 carries the post-translational modification Phosphoserine.

Belongs to the SEN15 family. As to quaternary structure, homodimer. tRNA splicing endonuclease is a heterotetramer composed of TSEN2, TSEN15, TSEN34/LENG5 and TSEN54. tRNA splicing endonuclease complex also contains proteins of the Pre-mRNA 3' end processing machinery, such as CLP1, CPSF1, CPSF4 and CSTF2. Widely expressed. Highly expressed in testis and uterus.

Its subcellular location is the nucleus. The protein resides in the nucleolus. Non-catalytic subunit of the tRNA-splicing endonuclease complex, a complex responsible for identification and cleavage of the splice sites in pre-tRNA. It cleaves pre-tRNA at the 5' and 3' splice sites to release the intron. The products are an intron and two tRNA half-molecules bearing 2',3' cyclic phosphate and 5'-OH termini. There are no conserved sequences at the splice sites, but the intron is invariably located at the same site in the gene, placing the splice sites an invariant distance from the constant structural features of the tRNA body. The tRNA splicing endonuclease is also involved in mRNA processing via its association with pre-mRNA 3'-end processing factors, establishing a link between pre-tRNA splicing and pre-mRNA 3'-end formation, suggesting that the endonuclease subunits function in multiple RNA-processing events. In Homo sapiens (Human), this protein is tRNA-splicing endonuclease subunit Sen15 (TSEN15).